Consider the following 480-residue polypeptide: Cytochrome P450 724B1 (480 aa).

A helical membrane pass occupies residues Leu6 to Phe26. Position 426 (Cys426) interacts with heme.

It belongs to the cytochrome P450 family. It depends on heme as a cofactor. In terms of tissue distribution, ubiquitously expressed at low levels, but preferentially in the internodes and the florets before flowering.

The protein localises to the membrane. It catalyses the reaction campesterol + reduced [NADPH--hemoprotein reductase] + O2 = (22S)-22-hydroxycampesterol + oxidized [NADPH--hemoprotein reductase] + H2O + H(+). It participates in plant hormone biosynthesis; brassinosteroid biosynthesis. Involved in brassinosteroid biosynthesis. May catalyze a C6-oxidation step and may be involved to supply 6-deoxotyphasterol and typhasterol. Involved in internode elongation and seed development. Catalyzes the conversion of campesterol (CR) to (22S)-22-hydroxycampesterol (22-OHCR, 22-hydroxyCR). The protein is Cytochrome P450 724B1 of Oryza sativa subsp. japonica (Rice).